The sequence spans 1085 residues: Aminopeptidase N (1085 aa).

Positions 1-30 form a signal peptide, required for ER targeting and membrane association; not cleaved; that stretch reads MKLTKGCAYKYIIFTVLILANILYDNKKRC. The segment at 1–200 is sufficient for targeting to the food vacuole; the sequence is MKLTKGCAYK…VKKNEPKIHY (200 aa). The interval 108–130 is disordered; that stretch reads EKGDNNNNNHQNNNGNDNKKRLG. Over residues 112–123 the composition is skewed to low complexity; the sequence is NNNNNHQNNNGN. Glutamate 319, glycine 460, alanine 461, and glutamate 463 together coordinate a peptide. Position 496 (histidine 496) interacts with Zn(2+). Glutamate 497 acts as the Proton acceptor in catalysis. The Zn(2+) site is built by histidine 500 and glutamate 519.

This sequence belongs to the peptidase M1 family. Heterodimer of the p68 form and the p35 form which are derived from the p120 precursor. Zn(2+) is required as a cofactor. In terms of processing, the full length protein appears to be cleaved into a 120 kDa precursor. This precursor is then proteolytically cleaved at the N-terminus generating a 96 kDa form which is further processed at the C-terminus into 68 kDa and 35 kDa forms that remain associated.

The protein resides in the parasitophorous vacuole membrane. It is found in the nucleus. It localises to the cytoplasm. Its subcellular location is the vacuole lumen. Inhibited by 1,10-phenanthroline, EDTA and bestatin. Inhibited by (Benzyl)Tyr-Ala (BTA). Activity is not affected by phosphoramidin, PMSF, leupeptin, iodoacetamide or pepstatin. In terms of biological role, displays aminopeptidase activity with a broad substrate specificity. Preferentially, cleaves after Leu and Met, but also cleaves after Ala and Arg. Low activity towards Lys, Phe, Tyr, Trp, Gln, Ser and Gly and negligible activity towards Glu, Asp, Pro, Ile, Thr, Val, His and Asn. Has dipeptidase activity. Plays a role in the terminal stages of host hemoglobin digestion by cleaving the N-terminal residue of small hemoglobin-derived oligopeptides. The sequence is that of Aminopeptidase N from Plasmodium falciparum (isolate 3D7).